Here is a 156-residue protein sequence, read N- to C-terminus: Small ribosomal subunit protein uS7 (156 aa).

Belongs to the universal ribosomal protein uS7 family. Part of the 30S ribosomal subunit. Contacts proteins S9 and S11.

In terms of biological role, one of the primary rRNA binding proteins, it binds directly to 16S rRNA where it nucleates assembly of the head domain of the 30S subunit. Is located at the subunit interface close to the decoding center, probably blocks exit of the E-site tRNA. The chain is Small ribosomal subunit protein uS7 from Staphylococcus saprophyticus subsp. saprophyticus (strain ATCC 15305 / DSM 20229 / NCIMB 8711 / NCTC 7292 / S-41).